The chain runs to 878 residues: NUT family member 2B (878 aa).

Disordered regions lie at residues 273 to 324 (WSQG…DDSC), 417 to 512 (QKSQ…PEEI), 527 to 560 (LLGP…PPDP), 624 to 693 (PPLK…GMAR), 709 to 757 (LRAA…EEEE), and 775 to 878 (WLPQ…HCSQ). Composition is skewed to pro residues over residues 278–288 (PLPPPPPPAAQ) and 427–444 (CLPP…PPAP). A compositionally biased stretch (basic residues) spans 476-487 (TKARRPPPRPHR). Over residues 537–551 (EPEKQREEGKVKQPQ) the composition is skewed to basic and acidic residues.

It belongs to the NUT family.

This Homo sapiens (Human) protein is NUT family member 2B (NUTM2B).